A 323-amino-acid polypeptide reads, in one-letter code: Phospho-N-acetylmuramoyl-pentapeptide-transferase (323 aa).

The next 9 membrane-spanning stretches (helical) occupy residues 3–23 (NILLPLLGGFIITAAFMPALI), 52–72 (MGGLLFIVAIAVMTLLTSWVL), 77–97 (MLPTTWILIFILVLYGALGMW), 121–141 (IVGALILFWVYTHEQLPMALH), 145–165 (IGNWHMSGWYAVFVILWLVGF), 175–195 (LDGLVSGLASIAFAAYGIVAW), 200–220 (INIAIFCFAVVGSLLGFLIFN), 226–248 (IFMGDTGSLALGGALAAVSILLH), and 301–321 (IDLTFWGIGLVTALSGVWVIL).

This sequence belongs to the glycosyltransferase 4 family. MraY subfamily. Mg(2+) serves as cofactor.

It is found in the cell membrane. The enzyme catalyses UDP-N-acetyl-alpha-D-muramoyl-L-alanyl-gamma-D-glutamyl-L-lysyl-D-alanyl-D-alanine + di-trans,octa-cis-undecaprenyl phosphate = Mur2Ac(oyl-L-Ala-gamma-D-Glu-L-Lys-D-Ala-D-Ala)-di-trans,octa-cis-undecaprenyl diphosphate + UMP. Its pathway is cell wall biogenesis; peptidoglycan biosynthesis. Its function is as follows. Catalyzes the initial step of the lipid cycle reactions in the biosynthesis of the cell wall peptidoglycan: transfers peptidoglycan precursor phospho-MurNAc-pentapeptide from UDP-MurNAc-pentapeptide onto the lipid carrier undecaprenyl phosphate, yielding undecaprenyl-pyrophosphoryl-MurNAc-pentapeptide, known as lipid I. In Levilactobacillus brevis (strain ATCC 367 / BCRC 12310 / CIP 105137 / JCM 1170 / LMG 11437 / NCIMB 947 / NCTC 947) (Lactobacillus brevis), this protein is Phospho-N-acetylmuramoyl-pentapeptide-transferase.